Reading from the N-terminus, the 273-residue chain is Homeobox protein Nkx-2.2 (273 aa).

2 disordered regions span residues 1–56 and 91–131; these read MSLT…LDAV and AASA…KRKR. Residues 20–38 show a composition bias toward acidic residues; the sequence is DTNDEEGSVAEGPEEESEG. The segment at residues 128–187 is a DNA-binding region (homeobox); sequence KRKRRVLFSKAQTYELERRFRQQRYLSAPEREHLASLIRLTPTQVKIWFQNHRYKMKRAR.

This sequence belongs to the NK-2 homeobox family. In terms of assembly, interacts with OLIG2.

Its subcellular location is the nucleus. In terms of biological role, transcriptional activator involved in the development of insulin-producting beta cells in the endocrine pancreas. May also be involved in specifying diencephalic neuromeric boundaries, and in controlling the expression of genes that play a role in axonal guidance. Binds to elements within the NEUROD1 promoter. In Mesocricetus auratus (Golden hamster), this protein is Homeobox protein Nkx-2.2 (NKX2-2).